The chain runs to 296 residues: 4-hydroxybenzoate octaprenyltransferase (296 aa).

Transmembrane regions (helical) follow at residues 28-48, 51-71, 102-122, 143-163, 174-194, 212-232, 233-253, and 274-294; these read IGTL…SDGI, LAVL…GCVI, LLLT…LNHL, FFPI…PMAF, AWIL…VYAM, FGRY…LLMA, VLGA…IVLL, and FLAN…HTFF.

This sequence belongs to the UbiA prenyltransferase family. Mg(2+) is required as a cofactor.

The protein resides in the cell inner membrane. It carries out the reaction all-trans-octaprenyl diphosphate + 4-hydroxybenzoate = 4-hydroxy-3-(all-trans-octaprenyl)benzoate + diphosphate. Its pathway is cofactor biosynthesis; ubiquinone biosynthesis. Catalyzes the prenylation of para-hydroxybenzoate (PHB) with an all-trans polyprenyl group. Mediates the second step in the final reaction sequence of ubiquinone-8 (UQ-8) biosynthesis, which is the condensation of the polyisoprenoid side chain with PHB, generating the first membrane-bound Q intermediate 3-octaprenyl-4-hydroxybenzoate. This Neisseria gonorrhoeae (strain ATCC 700825 / FA 1090) protein is 4-hydroxybenzoate octaprenyltransferase.